A 74-amino-acid chain; its full sequence is Guanine nucleotide-binding protein G(T) subunit gamma-T1 (74 aa).

Cys-71 is modified (cysteine methyl ester). Residue Cys-71 is the site of S-farnesyl cysteine attachment. The propeptide at 72-74 is removed in mature form; sequence VIS.

Belongs to the G protein gamma family. In terms of assembly, g proteins are composed of 3 units, alpha, beta and gamma. As to expression, retinal rod outer segment.

The protein localises to the cell membrane. In terms of biological role, guanine nucleotide-binding proteins (G proteins) are involved as a modulator or transducer in various transmembrane signaling systems. The beta and gamma chains are required for the GTPase activity, for replacement of GDP by GTP, and for G protein-effector interaction. The polypeptide is Guanine nucleotide-binding protein G(T) subunit gamma-T1 (GNGT1) (Canis lupus familiaris (Dog)).